The sequence spans 330 residues: Aspartate--ammonia ligase (330 aa).

Belongs to the class-II aminoacyl-tRNA synthetase family. AsnA subfamily.

It localises to the cytoplasm. The catalysed reaction is L-aspartate + NH4(+) + ATP = L-asparagine + AMP + diphosphate + H(+). It participates in amino-acid biosynthesis; L-asparagine biosynthesis; L-asparagine from L-aspartate (ammonia route): step 1/1. The sequence is that of Aspartate--ammonia ligase from Klebsiella pneumoniae (strain 342).